The sequence spans 229 residues: Uracil-DNA glycosylase (229 aa).

Asp-67 functions as the Proton acceptor in the catalytic mechanism.

Belongs to the uracil-DNA glycosylase (UDG) superfamily. UNG family.

The protein localises to the cytoplasm. It carries out the reaction Hydrolyzes single-stranded DNA or mismatched double-stranded DNA and polynucleotides, releasing free uracil.. Functionally, excises uracil residues from the DNA which can arise as a result of misincorporation of dUMP residues by DNA polymerase or due to deamination of cytosine. The chain is Uracil-DNA glycosylase from Coxiella burnetii (strain RSA 493 / Nine Mile phase I).